We begin with the raw amino-acid sequence, 500 residues long: Probable serine carboxypeptidase CPVL (500 aa).

An N-terminal signal peptide occupies residues 1–23 (MKVSLSFLLTILIVIITIKVNLS). N-linked (GlcNAc...) asparagine glycans are attached at residues Asn110 and Asn161. The active site involves Ser233. N-linked (GlcNAc...) asparagine glycosylation is found at Asn333 and Asn360. Residues Asp414 and His474 contribute to the active site.

It belongs to the peptidase S10 family.

It localises to the secreted. Functionally, may be involved in the digestion of phagocytosed particles in the lysosome, participation in an inflammatory protease cascade, and trimming of peptides for antigen presentation. The sequence is that of Probable serine carboxypeptidase CPVL (cpvl) from Dictyostelium discoideum (Social amoeba).